Here is a 530-residue protein sequence, read N- to C-terminus: UDP-glucuronosyltransferase 1A8 (530 aa).

The first 25 residues, 1–25 (MAPSGCPPSLPLCVCLFLASGFAQA), serve as a signal peptide directing secretion. N-linked (GlcNAc...) asparagine glycosylation is found at Asn-71, Asn-292, and Asn-430. The helical transmembrane segment at 488–504 (VIGFLLAIVLTVVFIVY) threads the bilayer.

The protein belongs to the UDP-glycosyltransferase family. Homodimers. Homooligomer. Interacts with UGT1A1, UGT1A3, UGT1A4, UGT1A6, UGT1A7, UGT1A8, UGT1A9 and UGT1A10 to form heterodimers.

The protein resides in the endoplasmic reticulum membrane. The catalysed reaction is glucuronate acceptor + UDP-alpha-D-glucuronate = acceptor beta-D-glucuronoside + UDP + H(+). It catalyses the reaction 17beta-estradiol + UDP-alpha-D-glucuronate = 17beta-estradiol 3-O-(beta-D-glucuronate) + UDP + H(+). It carries out the reaction 17alpha-estradiol + UDP-alpha-D-glucuronate = 17alpha-estradiol 3-O-(beta-D-glucuronate) + UDP + H(+). The enzyme catalyses estrone + UDP-alpha-D-glucuronate = estrone 3-O-(beta-D-glucuronate) + UDP + H(+). The catalysed reaction is 16alpha,17alpha-estriol + UDP-alpha-D-glucuronate = 16alpha,17alpha-estriol 3-O-(beta-D-glucuronate) + UDP + H(+). It catalyses the reaction 2-hydroxy-17beta-estradiol + UDP-alpha-D-glucuronate = 2-hydroxy-17beta-estradiol 3-O-(beta-D-glucuronate) + UDP + H(+). It carries out the reaction 2-hydroxy-17beta-estradiol + UDP-alpha-D-glucuronate = 17beta-estradiol 2-O-(beta-D-glucuronate) + UDP + H(+). The enzyme catalyses 2-hydroxyestrone + UDP-alpha-D-glucuronate = 2-hydroxyestrone 3-O-(beta-D-glucuronate) + UDP + H(+). The catalysed reaction is 4-hydroxy-17beta-estradiol + UDP-alpha-D-glucuronate = 4-hydroxy-17beta-estradiol 3-O-(beta-D-glucuronate) + UDP + H(+). It catalyses the reaction 4-hydroxy-17beta-estradiol + UDP-alpha-D-glucuronate = 17beta-estradiol 4-O-(beta-D-glucuronate) + UDP + H(+). It carries out the reaction 4-hydroxyestrone + UDP-alpha-D-glucuronate = 4-hydroxyestrone 3-O-(beta-D-glucuronate) + UDP + H(+). The enzyme catalyses 4-hydroxyestrone + UDP-alpha-D-glucuronate = estrone 4-O-(beta-D-glucuronate) + UDP + H(+). The catalysed reaction is 2-methoxy-17beta-estradiol + UDP-alpha-D-glucuronate = 2-methoxy-17beta-estradiol 3-O-(beta-D-glucuronate) + UDP + H(+). It catalyses the reaction 2-methoxyestrone + UDP-alpha-D-glucuronate = 2-methoxyestrone 3-O-(beta-D-glucuronate) + UDP + H(+). It carries out the reaction 4-methoxy-17beta-estradiol + UDP-alpha-D-glucuronate = 4-methoxy-17beta-estradiol 3-O-(beta-D-glucuronate) + UDP + H(+). The enzyme catalyses 4-methoxyestrone + UDP-alpha-D-glucuronate = 4-methoxyestrone 3-O-(beta-D-glucuronate) + UDP + H(+). The catalysed reaction is 17beta-hydroxy-5alpha-androstan-3-one + UDP-alpha-D-glucuronate = 5alpha-dihydrotestosterone 17-O-(beta-D-glucuronate) + UDP + H(+). It catalyses the reaction 5alpha-dihydrotestosterone 17-O-(beta-D-glucuronate) + UDP-alpha-D-glucuronate = 5alpha-dihydrotestosterone 17-O-[beta-D-glucuronosyl-(1-&gt;2)-glucuronate] + UDP + H(+). It carries out the reaction prunetin + UDP-alpha-D-glucuronate = prunetin-4'-O-beta-D-glucuronide + UDP. The enzyme catalyses prunetin + UDP-alpha-D-glucuronate = prunetin-5-O-beta-D-glucuronide + UDP. The catalysed reaction is (E)-ferulate + UDP-alpha-D-glucuronate = (E)-4-O-(beta-D-glucuronosyl)-ferulate + UDP + H(+). It catalyses the reaction (E)-ferulate + UDP-alpha-D-glucuronate = (E)-ferulic acid beta-D-glucuronate ester + UDP. It carries out the reaction candesartan + UDP-alpha-D-glucuronate = candesartan O-beta-D-glucuronoside + UDP. The enzyme catalyses mycophenolate + UDP-alpha-D-glucuronate = mycophenolate 7-O-beta-D-glucuronide + UDP + H(+). Functionally, UDP-glucuronosyltransferase (UGT) that catalyzes phase II biotransformation reactions in which lipophilic substrates are conjugated with glucuronic acid to increase the metabolite's water solubility, thereby facilitating excretion into either the urine or bile. Essential for the elimination and detoxification of drugs, xenobiotics and endogenous compounds. Catalyzes the glucuronidation of endogenous steroid hormones such as androgens and estrogens. Produces dihydrotestosterone (DHT) diglucuronide from the DHT after two subsequent glucoronidation steps. Involved in the glucuronidation of the phytochemical ferulic acid at the phenolic or the carboxylic acid group. Also catalyzes the glucuronidation of the isoflavones genistein, daidzein, glycitein, formononetin, biochanin A and prunetin, which are phytoestrogens with anticancer and cardiovascular properties. Involved in the glucuronidation of the AGTR1 angiotensin receptor antagonist caderastan, a drug which can inhibit the effect of angiotensin II. Also metabolizes mycophenolate, an immunosuppressive agent. This Rattus norvegicus (Rat) protein is UDP-glucuronosyltransferase 1A8.